Here is a 392-residue protein sequence, read N- to C-terminus: Zinc finger protein CONSTANS-LIKE 7 (392 aa).

Residues Cys-22, Cys-25, Cys-46, and His-51 each contribute to the Zn(2+) site. A B box-type; atypical zinc finger spans residues Cys-22 to Leu-65. Residues Lys-226–Lys-254 are a coiled coil. Disordered stretches follow at residues Glu-246–Lys-271 and Ser-326–Glu-346. Over residues Gly-259–Lys-271 the composition is skewed to basic and acidic residues. One can recognise a CCT domain in the interval Arg-345–Arg-387.

This sequence belongs to the CONSTANS family.

It is found in the nucleus. This chain is Zinc finger protein CONSTANS-LIKE 7 (COL7), found in Arabidopsis thaliana (Mouse-ear cress).